We begin with the raw amino-acid sequence, 116 residues long: NADH-ubiquinone oxidoreductase chain 3 (116 aa).

A run of 3 helical transmembrane segments spans residues 3–23 (LITT…TVSF), 56–76 (FFLI…LLPL), and 85–105 (PALT…GLIY).

The protein belongs to the complex I subunit 3 family.

The protein localises to the mitochondrion membrane. It carries out the reaction a ubiquinone + NADH + 5 H(+)(in) = a ubiquinol + NAD(+) + 4 H(+)(out). In terms of biological role, core subunit of the mitochondrial membrane respiratory chain NADH dehydrogenase (Complex I) that is believed to belong to the minimal assembly required for catalysis. Complex I functions in the transfer of electrons from NADH to the respiratory chain. The immediate electron acceptor for the enzyme is believed to be ubiquinone. The polypeptide is NADH-ubiquinone oxidoreductase chain 3 (MT-ND3) (Salmo trutta (Brown trout)).